Reading from the N-terminus, the 255-residue chain is 4-hydroxy-tetrahydrodipicolinate reductase (255 aa).

NAD(+) contacts are provided by residues 9–14 (GFKGKM), Asp35, 89–91 (GTT), and 115–118 (APNF). The Proton donor/acceptor role is filled by His145. (S)-2,3,4,5-tetrahydrodipicolinate is bound at residue His146. Catalysis depends on Lys149, which acts as the Proton donor. 155–156 (GT) serves as a coordination point for (S)-2,3,4,5-tetrahydrodipicolinate.

It belongs to the DapB family.

The protein resides in the cytoplasm. It catalyses the reaction (S)-2,3,4,5-tetrahydrodipicolinate + NAD(+) + H2O = (2S,4S)-4-hydroxy-2,3,4,5-tetrahydrodipicolinate + NADH + H(+). The catalysed reaction is (S)-2,3,4,5-tetrahydrodipicolinate + NADP(+) + H2O = (2S,4S)-4-hydroxy-2,3,4,5-tetrahydrodipicolinate + NADPH + H(+). Its pathway is amino-acid biosynthesis; L-lysine biosynthesis via DAP pathway; (S)-tetrahydrodipicolinate from L-aspartate: step 4/4. Catalyzes the conversion of 4-hydroxy-tetrahydrodipicolinate (HTPA) to tetrahydrodipicolinate. This Streptococcus pneumoniae (strain P1031) protein is 4-hydroxy-tetrahydrodipicolinate reductase.